The following is a 130-amino-acid chain: Small ribosomal subunit protein uS9 (130 aa).

It belongs to the universal ribosomal protein uS9 family.

The sequence is that of Small ribosomal subunit protein uS9 from Cupriavidus pinatubonensis (strain JMP 134 / LMG 1197) (Cupriavidus necator (strain JMP 134)).